Consider the following 312-residue polypeptide: DNA-directed RNA polymerase subunit alpha (312 aa).

The tract at residues 1–226 (MIEFEKPIIT…EHLNLFTDLT (226 aa)) is alpha N-terminal domain (alpha-NTD). Residues 242-312 (NDEKVLDRTI…DLGLGLKNDK (71 aa)) are alpha C-terminal domain (alpha-CTD).

Belongs to the RNA polymerase alpha chain family. In terms of assembly, homodimer. The RNAP catalytic core consists of 2 alpha, 1 beta, 1 beta' and 1 omega subunit. When a sigma factor is associated with the core the holoenzyme is formed, which can initiate transcription.

The catalysed reaction is RNA(n) + a ribonucleoside 5'-triphosphate = RNA(n+1) + diphosphate. Functionally, DNA-dependent RNA polymerase catalyzes the transcription of DNA into RNA using the four ribonucleoside triphosphates as substrates. The sequence is that of DNA-directed RNA polymerase subunit alpha from Streptococcus agalactiae serotype Ia (strain ATCC 27591 / A909 / CDC SS700).